A 338-amino-acid polypeptide reads, in one-letter code: Ketol-acid reductoisomerase (NADP(+)) (338 aa).

Residues 1–181 (MHVYYDKDCD…GGGRTGIIET (181 aa)) enclose the KARI N-terminal Rossmann domain. NADP(+)-binding positions include 24 to 27 (YGSQ), R47, S50, T52, and 82 to 85 (DEFQ). The active site involves H107. G133 is an NADP(+) binding site. In terms of domain architecture, KARI C-terminal knotted spans 182–327 (TFKDETETDL…AKLRAMMPWI (146 aa)). 4 residues coordinate Mg(2+): D190, E194, E226, and E230. S251 contacts substrate.

The protein belongs to the ketol-acid reductoisomerase family. Mg(2+) serves as cofactor.

It carries out the reaction (2R)-2,3-dihydroxy-3-methylbutanoate + NADP(+) = (2S)-2-acetolactate + NADPH + H(+). The enzyme catalyses (2R,3R)-2,3-dihydroxy-3-methylpentanoate + NADP(+) = (S)-2-ethyl-2-hydroxy-3-oxobutanoate + NADPH + H(+). The protein operates within amino-acid biosynthesis; L-isoleucine biosynthesis; L-isoleucine from 2-oxobutanoate: step 2/4. It functions in the pathway amino-acid biosynthesis; L-valine biosynthesis; L-valine from pyruvate: step 2/4. Functionally, involved in the biosynthesis of branched-chain amino acids (BCAA). Catalyzes an alkyl-migration followed by a ketol-acid reduction of (S)-2-acetolactate (S2AL) to yield (R)-2,3-dihydroxy-isovalerate. In the isomerase reaction, S2AL is rearranged via a Mg-dependent methyl migration to produce 3-hydroxy-3-methyl-2-ketobutyrate (HMKB). In the reductase reaction, this 2-ketoacid undergoes a metal-dependent reduction by NADPH to yield (R)-2,3-dihydroxy-isovalerate. The sequence is that of Ketol-acid reductoisomerase (NADP(+)) from Cellvibrio japonicus (strain Ueda107) (Pseudomonas fluorescens subsp. cellulosa).